The following is a 195-amino-acid chain: dITP/XTP pyrophosphatase (195 aa).

8–13 (TNNQGK) contributes to the substrate binding site. Residues Glu39 and Asp68 each contribute to the Mg(2+) site. The active-site Proton acceptor is the Asp68. Residues Ser69, 149 to 152 (FGYD), Lys172, and 177 to 178 (HR) contribute to the substrate site.

Belongs to the HAM1 NTPase family. As to quaternary structure, homodimer. Mg(2+) serves as cofactor.

The catalysed reaction is XTP + H2O = XMP + diphosphate + H(+). It carries out the reaction dITP + H2O = dIMP + diphosphate + H(+). It catalyses the reaction ITP + H2O = IMP + diphosphate + H(+). Functionally, pyrophosphatase that catalyzes the hydrolysis of nucleoside triphosphates to their monophosphate derivatives, with a high preference for the non-canonical purine nucleotides XTP (xanthosine triphosphate), dITP (deoxyinosine triphosphate) and ITP. Seems to function as a house-cleaning enzyme that removes non-canonical purine nucleotides from the nucleotide pool, thus preventing their incorporation into DNA/RNA and avoiding chromosomal lesions. This Staphylococcus epidermidis (strain ATCC 12228 / FDA PCI 1200) protein is dITP/XTP pyrophosphatase.